Reading from the N-terminus, the 219-residue chain is 2-hydroxy-3-keto-5-methylthiopentenyl-1-phosphate phosphatase (219 aa).

Belongs to the HAD-like hydrolase superfamily. MtnX family.

The enzyme catalyses 2-hydroxy-5-methylsulfanyl-3-oxopent-1-enyl phosphate + H2O = 1,2-dihydroxy-5-(methylsulfanyl)pent-1-en-3-one + phosphate. It functions in the pathway amino-acid biosynthesis; L-methionine biosynthesis via salvage pathway; L-methionine from S-methyl-5-thio-alpha-D-ribose 1-phosphate: step 4/6. Its function is as follows. Dephosphorylates 2-hydroxy-3-keto-5-methylthiopentenyl-1-phosphate (HK-MTPenyl-1-P) yielding 1,2-dihydroxy-3-keto-5-methylthiopentene (DHK-MTPene). The polypeptide is 2-hydroxy-3-keto-5-methylthiopentenyl-1-phosphate phosphatase (Exiguobacterium sibiricum (strain DSM 17290 / CCUG 55495 / CIP 109462 / JCM 13490 / 255-15)).